We begin with the raw amino-acid sequence, 418 residues long: Glucose-1-phosphate adenylyltransferase (418 aa).

Residues tyrosine 107, glycine 172, 187 to 188, and serine 205 contribute to the alpha-D-glucose 1-phosphate site; that span reads EK.

Belongs to the bacterial/plant glucose-1-phosphate adenylyltransferase family. Homotetramer.

It catalyses the reaction alpha-D-glucose 1-phosphate + ATP + H(+) = ADP-alpha-D-glucose + diphosphate. It functions in the pathway glycan biosynthesis; glycogen biosynthesis. Involved in the biosynthesis of ADP-glucose, a building block required for the elongation reactions to produce glycogen. Catalyzes the reaction between ATP and alpha-D-glucose 1-phosphate (G1P) to produce pyrophosphate and ADP-Glc. This chain is Glucose-1-phosphate adenylyltransferase, found in Gemmatimonas aurantiaca (strain DSM 14586 / JCM 11422 / NBRC 100505 / T-27).